The sequence spans 484 residues: Cysteine--tRNA ligase (484 aa).

Residue C27 coordinates Zn(2+). The 'HIGH' region signature appears at 29–39 (PTTYNYIHLGN). Positions 207, 232, and 236 each coordinate Zn(2+). The short motif at 264–268 (KMSKS) is the 'KMSKS' region element. K267 contacts ATP.

It belongs to the class-I aminoacyl-tRNA synthetase family. In terms of assembly, monomer. Requires Zn(2+) as cofactor.

The protein resides in the cytoplasm. The enzyme catalyses tRNA(Cys) + L-cysteine + ATP = L-cysteinyl-tRNA(Cys) + AMP + diphosphate. The sequence is that of Cysteine--tRNA ligase from Pelotomaculum thermopropionicum (strain DSM 13744 / JCM 10971 / SI).